We begin with the raw amino-acid sequence, 487 residues long: Acetyl-coenzyme A carboxylase carboxyl transferase subunit beta, chloroplastic (487 aa).

The region spanning 223–487 (LWVQCENCYG…LHAFFPLNQN (265 aa)) is the CoA carboxyltransferase N-terminal domain. Residues C227, C230, C246, and C249 each coordinate Zn(2+). A C4-type zinc finger spans residues 227–249 (CENCYGLNYKKSFKSKMNLCEQC).

The protein belongs to the AccD/PCCB family. Acetyl-CoA carboxylase is a heterohexamer composed of biotin carboxyl carrier protein, biotin carboxylase and 2 subunits each of ACCase subunit alpha and ACCase plastid-coded subunit beta (accD). The cofactor is Zn(2+).

It is found in the plastid. The protein localises to the chloroplast stroma. It catalyses the reaction N(6)-carboxybiotinyl-L-lysyl-[protein] + acetyl-CoA = N(6)-biotinyl-L-lysyl-[protein] + malonyl-CoA. It participates in lipid metabolism; malonyl-CoA biosynthesis; malonyl-CoA from acetyl-CoA: step 1/1. Its function is as follows. Component of the acetyl coenzyme A carboxylase (ACC) complex. Biotin carboxylase (BC) catalyzes the carboxylation of biotin on its carrier protein (BCCP) and then the CO(2) group is transferred by the transcarboxylase to acetyl-CoA to form malonyl-CoA. This Panax ginseng (Korean ginseng) protein is Acetyl-coenzyme A carboxylase carboxyl transferase subunit beta, chloroplastic.